Here is a 385-residue protein sequence, read N- to C-terminus: Linearmycin resistance permease protein LnrN (385 aa).

6 consecutive transmembrane segments (helical) span residues 22 to 42, 198 to 218, 239 to 259, 274 to 294, 305 to 325, and 360 to 380; these read YLIM…MLSG, AAGF…GTIL, IGAG…GILL, AAVI…GLMI, LAFG…YWPI, and DILG…AAGL. Residues 163–382 enclose the ABC transmembrane type-2 domain; it reads KTVFAKKHED…AITFAAGLKA (220 aa).

The protein belongs to the ABC-2 integral membrane protein family. In terms of assembly, the complex is composed of two ATP-binding proteins (LnrL) and two transmembrane proteins (LnrM and LnrN).

It localises to the cell membrane. Required for resistance to linearmycins, a family of antibiotic-specialized metabolites produced by some streptomycetes. Part of the ABC transporter complex LnrLMN that probably facilitates linearmycin removal from the membrane. Responsible for the translocation of the substrate across the membrane. Also mediates KinC-dependent biofilm morphology. This is Linearmycin resistance permease protein LnrN from Bacillus subtilis (strain 168).